Here is a 377-residue protein sequence, read N- to C-terminus: Alanine racemase (377 aa).

Lysine 37 functions as the Proton acceptor; specific for D-alanine in the catalytic mechanism. Lysine 37 bears the N6-(pyridoxal phosphate)lysine mark. A substrate-binding site is contributed by arginine 135. Tyrosine 271 (proton acceptor; specific for L-alanine) is an active-site residue. Position 319 (methionine 319) interacts with substrate.

This sequence belongs to the alanine racemase family. Pyridoxal 5'-phosphate is required as a cofactor.

The catalysed reaction is L-alanine = D-alanine. It participates in amino-acid biosynthesis; D-alanine biosynthesis; D-alanine from L-alanine: step 1/1. Its function is as follows. Catalyzes the interconversion of L-alanine and D-alanine. May also act on other amino acids. This is Alanine racemase (alr) from Helicobacter pylori (strain Shi470).